We begin with the raw amino-acid sequence, 2710 residues long: Serine/threonine-protein kinase ATR (2710 aa).

The region spanning 1647-2257 (TLAKASFRCQ…LWMMAAVSKS (611 aa)) is the FAT domain. A PI3K/PI4K catalytic domain is found at 2368-2680 (IADDAEILNS…GVNAAPSLPL (313 aa)). The segment at 2374–2380 (ILNSLQK) is G-loop. The tract at residues 2545 to 2553 (GLGDRHGEN) is catalytic loop. Residues 2565–2589 (HVDFSCLFDKGLLLEKPEVVPFRFT) are activation loop. In terms of domain architecture, FATC spans 2678-2710 (LPLSVEGQARRLIAEAVSHSNLGKMYVWWMAWF).

This sequence belongs to the PI3/PI4-kinase family. ATM subfamily.

The protein localises to the nucleus. It carries out the reaction L-seryl-[protein] + ATP = O-phospho-L-seryl-[protein] + ADP + H(+). The catalysed reaction is L-threonyl-[protein] + ATP = O-phospho-L-threonyl-[protein] + ADP + H(+). Probable serine/threonine kinase. Seems to play a central role in cell-cycle regulation by transmitting DNA damage signals to downstream effectors of cell-cycle progression. May recognize the substrate consensus sequence [ST]-Q and phosphorylate histone variant H2AX to form H2AXS139ph at sites of DNA damage, thereby regulating DNA damage response mechanism. This chain is Serine/threonine-protein kinase ATR, found in Oryza sativa subsp. japonica (Rice).